The following is a 610-amino-acid chain: F-box/LRR-repeat protein 4 (610 aa).

The F-box domain maps to 5–52 (DRINNCLPEELILEIFRRLESKPNRDACSLVCKRWLSLERFSRTTLRI). LRR repeat units lie at residues 53-79 (GASFSPDDFISLLSRRFLYITSIHVDE), 124-149 (SSSLTDTGLTALANGFPRIENLSLIW), 150-175 (CPNVSSVGLCSLAQKCTSLKSLDLQG), 178-200 (VGDQGLAAVGKFCKQLEELNLRF), 201-227 (CEGLTDVGVIDLVVGCSKSLKSIGVAA), 228-253 (SAKITDLSLEAVGSHCKLLEVLYLDS), 256-277 (IHDKGLIAVAQGCHRLKNLKLQ), 278-303 (CVSVTDVAFAAVGELCTSLERLALYS), 304-329 (FQHFTDKGMRAIGKGSKKLKDLTLSD), 330-355 (CYFVSCKGLEAIAHGCKELERVEING), 356-381 (CHNIGTRGIEAIGKSCPRLKELALLY), 382-407 (CQRIGNSALQEIGKGCKSLEILHLVD), 408-433 (CSGIGDIAMCSIAKGCRNLKKLHIRR), 434-459 (CYEIGNKGIISIGKHCKSLTELSLRF), 460-484 (CDKVGNKALIAIGKGCSLQQLNVSG), 485-510 (CNQISDAGITAIARGCPQLTHLDISV), 511-536 (LQNIGDMPLAELGEGCPMLKDLVLSH), 537-562 (CHHITDNGLNHLVQKCKLLETCHMVY), and 563-588 (CPGITSAGVATVVSSCPHIKKVLIEK). The disordered stretch occupies residues 88–125 (LSPSPKRKRGRDSSSPSSSKRKKLTDKTHSGAENVESS).

In Arabidopsis thaliana (Mouse-ear cress), this protein is F-box/LRR-repeat protein 4 (FBL4).